A 645-amino-acid chain; its full sequence is Threonine--tRNA ligase (645 aa).

The TGS domain maps to 1–62 (MSIHITFPDG…VEDGSLEIVT (62 aa)). Residues 242 to 541 (DHRKLGKELD…LTEVYKGAFP (300 aa)) form a catalytic region. Positions 336, 387, and 518 each coordinate Zn(2+).

The protein belongs to the class-II aminoacyl-tRNA synthetase family. As to quaternary structure, homodimer. The cofactor is Zn(2+).

It is found in the cytoplasm. The catalysed reaction is tRNA(Thr) + L-threonine + ATP = L-threonyl-tRNA(Thr) + AMP + diphosphate + H(+). Functionally, catalyzes the attachment of threonine to tRNA(Thr) in a two-step reaction: L-threonine is first activated by ATP to form Thr-AMP and then transferred to the acceptor end of tRNA(Thr). Also edits incorrectly charged L-seryl-tRNA(Thr). The polypeptide is Threonine--tRNA ligase (Enterococcus faecalis (strain ATCC 700802 / V583)).